The following is a 268-amino-acid chain: Tryptophan synthase alpha chain (268 aa).

Catalysis depends on proton acceptor residues glutamate 49 and aspartate 60.

Belongs to the TrpA family. As to quaternary structure, tetramer of two alpha and two beta chains.

The enzyme catalyses (1S,2R)-1-C-(indol-3-yl)glycerol 3-phosphate + L-serine = D-glyceraldehyde 3-phosphate + L-tryptophan + H2O. The protein operates within amino-acid biosynthesis; L-tryptophan biosynthesis; L-tryptophan from chorismate: step 5/5. In terms of biological role, the alpha subunit is responsible for the aldol cleavage of indoleglycerol phosphate to indole and glyceraldehyde 3-phosphate. This Aliivibrio fischeri (strain MJ11) (Vibrio fischeri) protein is Tryptophan synthase alpha chain.